The primary structure comprises 144 residues: Putative pre-16S rRNA nuclease (144 aa).

The protein belongs to the YqgF nuclease family.

The protein localises to the cytoplasm. In terms of biological role, could be a nuclease involved in processing of the 5'-end of pre-16S rRNA. In Lacticaseibacillus casei (strain BL23) (Lactobacillus casei), this protein is Putative pre-16S rRNA nuclease.